We begin with the raw amino-acid sequence, 188 residues long: Elongation factor P (188 aa).

This sequence belongs to the elongation factor P family.

It is found in the cytoplasm. The protein operates within protein biosynthesis; polypeptide chain elongation. Functionally, involved in peptide bond synthesis. Stimulates efficient translation and peptide-bond synthesis on native or reconstituted 70S ribosomes in vitro. Probably functions indirectly by altering the affinity of the ribosome for aminoacyl-tRNA, thus increasing their reactivity as acceptors for peptidyl transferase. The sequence is that of Elongation factor P from Azotobacter vinelandii (strain DJ / ATCC BAA-1303).